Consider the following 210-residue polypeptide: Redox-sensing transcriptional repressor Rex (210 aa).

A DNA-binding region (H-T-H motif) is located at residues Lys-17–Phe-56. Gly-91 to Gly-96 contributes to the NAD(+) binding site.

The protein belongs to the transcriptional regulatory Rex family. As to quaternary structure, homodimer.

It localises to the cytoplasm. In terms of biological role, modulates transcription in response to changes in cellular NADH/NAD(+) redox state. The protein is Redox-sensing transcriptional repressor Rex of Clostridium kluyveri (strain ATCC 8527 / DSM 555 / NBRC 12016 / NCIMB 10680 / K1).